A 169-amino-acid chain; its full sequence is Small ribosomal subunit protein uS5 (169 aa).

Positions 14–77 constitute an S5 DRBM domain; sequence MKEQVVDIRR…QAAKKNLLLV (64 aa).

It belongs to the universal ribosomal protein uS5 family. Part of the 30S ribosomal subunit. Contacts proteins S4 and S8.

With S4 and S12 plays an important role in translational accuracy. In terms of biological role, located at the back of the 30S subunit body where it stabilizes the conformation of the head with respect to the body. In Alkaliphilus metalliredigens (strain QYMF), this protein is Small ribosomal subunit protein uS5.